The sequence spans 428 residues: Cholecystokinin receptor type A (428 aa).

The Extracellular portion of the chain corresponds to 1 to 41; the sequence is MEVADSLLGNGSDVPPPCELGLENETLVCLEQPRAAKEWQP. Residues Asn-10 and Asn-24 are each glycosylated (N-linked (GlcNAc...) asparagine). Cys-18 and Cys-29 are disulfide-bonded. A helical membrane pass occupies residues 42–67; that stretch reads AVQILLYSLIFLLSVLGNTLVITVLI. The Cytoplasmic portion of the chain corresponds to 68 to 77; sequence RNKRMRTVTN. A helical transmembrane segment spans residues 78 to 104; sequence IFLLSLAVSDLMLCLFCMPFNLIPNLL. The Extracellular segment spans residues 105 to 115; sequence KDFIFGSAVCK. An intrachain disulfide couples Cys-114 to Cys-196. Residues 116-137 traverse the membrane as a helical segment; that stretch reads TTTYFMGTSVSVSTFNLVAISL. Residues 138–157 lie on the Cytoplasmic side of the membrane; that stretch reads ERYGAICKPLQSRVWQTKSH. A helical transmembrane segment spans residues 158–178; that stretch reads ALKVIATTWCLSFTIMTPYPI. The Extracellular segment spans residues 179–210; it reads YSNLVPFTKTNNQTANMCRFLLPNDVMQQSWH. N-linked (GlcNAc...) asparagine glycosylation is present at Asn-190. The chain crosses the membrane as a helical span at residues 211 to 234; sequence TFLLLILFLIPGIVMMVAYGLISL. Residues 235–313 lie on the Cytoplasmic side of the membrane; the sequence is ELYQGIKFDA…NLMAKKRVIR (79 aa). The tract at residues 250–269 is disordered; sequence ARDRNPSTGSSGRYEDGDGC. Residues 314–334 form a helical membrane-spanning segment; sequence MLMVIVVLFFLCWMPIFSANA. Over 335 to 349 the chain is Extracellular; the sequence is WRAYDTASAERRLSG. The chain crosses the membrane as a helical span at residues 350–373; the sequence is TPISFILLLSYTSSCVNPIIYCFM. Topologically, residues 374–428 are cytoplasmic; the sequence is NKRFRLGFLATFPCCPHPGPPGPRGEVGEEEEGRTTGASLSRYSYSHMSASAPGP. Cys-387 carries S-palmitoyl cysteine lipidation. Residues 393 to 428 form a disordered region; that stretch reads PPGPRGEVGEEEEGRTTGASLSRYSYSHMSASAPGP. Residues 409–422 show a composition bias toward polar residues; sequence TGASLSRYSYSHMS.

This sequence belongs to the G-protein coupled receptor 1 family.

Its subcellular location is the cell membrane. Its function is as follows. Receptor for cholecystokinin. Mediates pancreatic growth and enzyme secretion, smooth muscle contraction of the gall bladder and stomach. Has a 1000-fold higher affinity for CCK rather than for gastrin. It modulates feeding and dopamine-induced behavior in the central and peripheral nervous system. This receptor mediates its action by association with G proteins that activate a phosphatidylinositol-calcium second messenger system. The polypeptide is Cholecystokinin receptor type A (CCKAR) (Canis lupus familiaris (Dog)).